We begin with the raw amino-acid sequence, 139 residues long: Probable transcription termination protein NusA (139 aa).

In terms of domain architecture, KH spans 31–97 (DDRVVYVVTA…YNVTVSENDT (67 aa)).

Belongs to the NusA family.

The protein resides in the cytoplasm. In terms of biological role, participates in transcription termination. This is Probable transcription termination protein NusA from Halobacterium salinarum (strain ATCC 29341 / DSM 671 / R1).